The sequence spans 666 residues: ATP-dependent RNA helicase DDX51 (666 aa).

Alanine 2 bears the N-acetylalanine mark. The tract at residues 9–152 (YPGPDAAAAA…AAPDGPALEE (144 aa)) is disordered. A compositionally biased stretch (low complexity) spans 10–28 (PGPDAAAAAGPEGAEAGAH). Over residues 33-48 (ALLERLQSRARERQQQ) the composition is skewed to basic and acidic residues. A compositionally biased stretch (low complexity) spans 49–58 (REPAQTEAAA). The segment covering 65 to 75 (RRRRRPRRRRR) has biased composition (basic residues). 2 positions are modified to phosphoserine: serine 83 and serine 103. Positions 97–108 (EDAGAESNEEAP) are enriched in acidic residues. Residues 221-229 (YFPVQAAVI) carry the Q motif motif. Residues 243-452 (GRGGYRPSDL…QLGLHQPRLF (210 aa)) form the Helicase ATP-binding domain. 256–263 (APTGSGKT) is a binding site for ATP. Residues 371-374 (DEAD) carry the DEAD box motif. The Helicase C-terminal domain maps to 494 to 640 (VVLHLVLEMG…RHELSSKLLQ (147 aa)).

This sequence belongs to the DEAD box helicase family. DDX51/DBP6 subfamily.

It is found in the nucleus. The protein resides in the nucleolus. It carries out the reaction ATP + H2O = ADP + phosphate + H(+). In terms of biological role, ATP-binding RNA helicase involved in the biogenesis of 60S ribosomal subunits. This Homo sapiens (Human) protein is ATP-dependent RNA helicase DDX51 (DDX51).